Reading from the N-terminus, the 256-residue chain is uncharacterized protein (256 aa).

The next 2 membrane-spanning stretches (helical) occupy residues 181-201 and 231-251; these read CCII…ASMV and GIAV…GLIA.

Its subcellular location is the cell membrane. This is an uncharacterized protein from Methanocaldococcus jannaschii (strain ATCC 43067 / DSM 2661 / JAL-1 / JCM 10045 / NBRC 100440) (Methanococcus jannaschii).